The primary structure comprises 196 residues: Elongation factor Ts (196 aa).

Positions 80 to 83 are involved in Mg(2+) ion dislocation from EF-Tu; it reads TDFV.

The protein belongs to the EF-Ts family. Heterotetramer composed of two EF-Ts.EF-Tu dimer complexes.

It localises to the cytoplasm. Its function is as follows. Associates with the EF-Tu.GDP complex and induces the exchange of GDP to GTP. It remains bound to the aminoacyl-tRNA.EF-Tu.GTP complex up to the GTP hydrolysis stage on the ribosome. The sequence is that of Elongation factor Ts (tsf) from Thermus thermophilus (strain ATCC 27634 / DSM 579 / HB8).